The sequence spans 69 residues: Light-harvesting protein B-870 beta chain (69 aa).

Positions 1–2 (MA) are excised as a propeptide. The Cytoplasmic portion of the chain corresponds to 3–22 (EVKQESLSGITEGEAKEFHK). His21 and His39 together coordinate a bacteriochlorophyll. A helical transmembrane segment spans residues 23 to 45 (IFTSSILVFFGVAAFAHLLVWIW). Over 46–56 (RPWVPGPNGYS) the chain is Periplasmic. The propeptide occupies 57–69 (ALETLTQTLTYLS).

It belongs to the antenna complex beta subunit family. In terms of assembly, the core complex is formed by different alpha and beta chains, binding bacteriochlorophyll molecules, and arranged most probably in tetrameric structures disposed around the reaction center. The non-pigmented gamma chains may constitute additional components.

The protein localises to the cell inner membrane. Functionally, antenna complexes are light-harvesting systems, which transfer the excitation energy to the reaction centers. This Rhodospirillum rubrum (strain ATCC 11170 / ATH 1.1.1 / DSM 467 / LMG 4362 / NCIMB 8255 / S1) protein is Light-harvesting protein B-870 beta chain.